A 274-amino-acid polypeptide reads, in one-letter code: Large ribosomal subunit protein uL2cy (274 aa).

Disordered regions lie at residues 1–25 (MAIH…VKSN) and 223–274 (MNPV…RRSK). Positions 7–25 (KTSTPSTRNGTVDSQVKSN) are enriched in polar residues.

It belongs to the universal ribosomal protein uL2 family. In terms of assembly, part of the 50S ribosomal subunit.

It localises to the plastid. It is found in the chloroplast. This is Large ribosomal subunit protein uL2cy (rpl2-B) from Atropa belladonna (Belladonna).